The chain runs to 129 residues: Follitropin subunit beta (129 aa).

The signal sequence occupies residues 1–20; sequence MKTLQFFFLFCCWKAICCNS. Disulfide bonds link Cys21/Cys69, Cys35/Cys84, Cys38/Cys122, Cys46/Cys100, Cys50/Cys102, and Cys105/Cys112. Asn25 and Asn42 each carry an N-linked (GlcNAc...) asparagine glycan.

The protein belongs to the glycoprotein hormones subunit beta family. Heterodimer. The active follitropin is a heterodimer composed of an alpha chain/CGA shared with other hormones and a unique beta chain/FSHB shown here.

Its subcellular location is the secreted. Functionally, together with the alpha chain CGA constitutes follitropin, the follicle-stimulating hormone, and provides its biological specificity to the hormone heterodimer. Binds FSHR, a G protein-coupled receptor, on target cells to activate downstream signaling pathways. Follitropin is involved in follicle development and spermatogenesis in reproductive organs. The sequence is that of Follitropin subunit beta (FSHB) from Gorilla gorilla gorilla (Western lowland gorilla).